The chain runs to 130 residues: Small ribosomal subunit protein uS11 (130 aa).

The protein belongs to the universal ribosomal protein uS11 family. As to quaternary structure, part of the 30S ribosomal subunit. Interacts with proteins S7 and S18. Binds to IF-3.

Functionally, located on the platform of the 30S subunit, it bridges several disparate RNA helices of the 16S rRNA. Forms part of the Shine-Dalgarno cleft in the 70S ribosome. This is Small ribosomal subunit protein uS11 from Alkalilimnicola ehrlichii (strain ATCC BAA-1101 / DSM 17681 / MLHE-1).